We begin with the raw amino-acid sequence, 432 residues long: Enolase (432 aa).

Position 167 (glutamine 167) interacts with (2R)-2-phosphoglycerate. Glutamate 209 functions as the Proton donor in the catalytic mechanism. Positions 246, 291, and 318 each coordinate Mg(2+). (2R)-2-phosphoglycerate-binding residues include lysine 343, arginine 372, serine 373, and lysine 394. Catalysis depends on lysine 343, which acts as the Proton acceptor.

Belongs to the enolase family. As to quaternary structure, component of the RNA degradosome, a multiprotein complex involved in RNA processing and mRNA degradation. The cofactor is Mg(2+).

Its subcellular location is the cytoplasm. The protein localises to the secreted. The protein resides in the cell surface. It carries out the reaction (2R)-2-phosphoglycerate = phosphoenolpyruvate + H2O. It participates in carbohydrate degradation; glycolysis; pyruvate from D-glyceraldehyde 3-phosphate: step 4/5. Its function is as follows. Catalyzes the reversible conversion of 2-phosphoglycerate (2-PG) into phosphoenolpyruvate (PEP). It is essential for the degradation of carbohydrates via glycolysis. The polypeptide is Enolase (Aliivibrio fischeri (strain MJ11) (Vibrio fischeri)).